Reading from the N-terminus, the 312-residue chain is HPr kinase/phosphorylase (312 aa).

Residues histidine 139 and lysine 160 contribute to the active site. Residue 154 to 161 participates in ATP binding; it reads GSSGVGKS. Position 161 (serine 161) interacts with Mg(2+). Aspartate 178 (proton acceptor; for phosphorylation activity. Proton donor; for dephosphorylation activity) is an active-site residue. An important for the catalytic mechanism of both phosphorylation and dephosphorylation region spans residues 202 to 211; that stretch reads LEIRGLGIIN. Position 203 (glutamate 203) interacts with Mg(2+). The active site involves arginine 244. The segment at 265–270 is important for the catalytic mechanism of dephosphorylation; the sequence is PVRPGR.

The protein belongs to the HPrK/P family. In terms of assembly, homohexamer. Mg(2+) serves as cofactor.

The enzyme catalyses [HPr protein]-L-serine + ATP = [HPr protein]-O-phospho-L-serine + ADP + H(+). The catalysed reaction is [HPr protein]-O-phospho-L-serine + phosphate + H(+) = [HPr protein]-L-serine + diphosphate. Its function is as follows. Catalyzes the ATP- as well as the pyrophosphate-dependent phosphorylation of a specific serine residue in HPr, a phosphocarrier protein of the phosphoenolpyruvate-dependent sugar phosphotransferase system (PTS). HprK/P also catalyzes the pyrophosphate-producing, inorganic phosphate-dependent dephosphorylation (phosphorolysis) of seryl-phosphorylated HPr (P-Ser-HPr). The two antagonistic activities of HprK/P are regulated by several intracellular metabolites, which change their concentration in response to the absence or presence of rapidly metabolisable carbon sources (glucose, fructose, etc.) in the growth medium. Therefore, by controlling the phosphorylation state of HPr, HPrK/P is a sensor enzyme that plays a major role in the regulation of carbon metabolism and sugar transport: it mediates carbon catabolite repression (CCR), and regulates PTS-catalyzed carbohydrate uptake and inducer exclusion. The protein is HPr kinase/phosphorylase of Listeria monocytogenes serotype 4b (strain CLIP80459).